The primary structure comprises 432 residues: MEMEKEFEEIDKAGNWAAIYQDIRHEASDFPCKVAKLPKNKNRNRYRDVSPFDHSRIKLHQEDNDYINASLIKMEEAQRSYILTQGPLPNTCGHFWEMVWEQKSRGVVMLNRIMEKGSLKCAQYWPQQEEKEMVFDDTGLKLTLISEDVKSYYTVRQLELENLTTKETREILHFHYTTWPDFGVPESPASFLNFLFKVRESGSLSLEHGPIVVHCSAGIGRSGTFCLADTCLLLMDKRKDPSSVDIKKVLLEMRRFRMGLIQTADQLRFSYLAVIEGAKFIMGDSSVQDQWKELSREDLDLPPEHVPPPPRPPKRTLEPHNGKCKELFSSHQWVSEETCGDEDSLAREEGRAQSSAMHSVSSMSPDTEVRRRMVGGGLQSAQASVPTEEELSSTEEEHKAHWPSHWKPFLVNVCMATLLATGAYLCYRVCFH.

At Met1 the chain carries N-acetylmethionine. The region spanning 3–277 is the Tyrosine-protein phosphatase domain; that stretch reads MEKEFEEIDK…RFSYLAVIEG (275 aa). A Phosphotyrosine modification is found at Tyr20. Position 50 is a phosphoserine; by CLK1, CLK2 and PKB/AKT1 or PKB/AKT2 (Ser50). Tyr66 bears the Phosphotyrosine; by EGFR mark. Residues Asp181 and 215–221 each bind substrate; that span reads CSAGIGR. The active-site Phosphocysteine intermediate is the Cys215. Cys215 is subject to Cysteine persulfide. Cys215 is modified (S-nitrosocysteine; in reversibly inhibited form). A phosphoserine; by CLK1 and CLK2 mark is found at Ser242 and Ser243. Gln262 is a substrate binding site. Disordered stretches follow at residues 297-322 and 335-399; these read EDLD…PHNG and SEET…EEHK. 3 positions are modified to phosphoserine: Ser335, Ser362, and Ser364. Residues 354 to 364 show a composition bias toward low complexity; the sequence is SSAMHSVSSMS. Thr367 carries the phosphothreonine modification.

It belongs to the protein-tyrosine phosphatase family. Non-receptor class 1 subfamily. Interacts with EPHA3 (phosphorylated); dephosphorylates EPHA3 and may regulate its trafficking and function. Interacts with MET. Interacts with NCK1. Post-translationally, ser-50 is the major site of phosphorylation as compared to Ser-242 and Ser-243. Activated by phosphorylation at Ser-50. In terms of processing, S-nitrosylation of Cys-215 inactivates the enzyme activity. Sulfhydration at Cys-215 following endoplasmic reticulum stress inactivates the enzyme activity, promoting EIF2AK3/PERK activity. Most abundant in testis. Also found in kidney, spleen, muscle, liver, heart and brain.

The protein localises to the endoplasmic reticulum membrane. It catalyses the reaction O-phospho-L-tyrosyl-[protein] + H2O = L-tyrosyl-[protein] + phosphate. Functionally, tyrosine-protein phosphatase which acts as a regulator of endoplasmic reticulum unfolded protein response. Mediates dephosphorylation of EIF2AK3/PERK; inactivating the protein kinase activity of EIF2AK3/PERK. May play an important role in CKII- and p60c-src-induced signal transduction cascades. May regulate the EFNA5-EPHA3 signaling pathway which modulates cell reorganization and cell-cell repulsion. May also regulate the hepatocyte growth factor receptor signaling pathway through dephosphorylation of MET. The sequence is that of Tyrosine-protein phosphatase non-receptor type 1 (Ptpn1) from Mus musculus (Mouse).